The chain runs to 166 residues: Small ribosomal subunit protein uS5 (166 aa).

The S5 DRBM domain occupies 12–75 (YIEKLVQVNR…EAARRNMIQV (64 aa)).

The protein belongs to the universal ribosomal protein uS5 family. In terms of assembly, part of the 30S ribosomal subunit. Contacts proteins S4 and S8.

With S4 and S12 plays an important role in translational accuracy. Functionally, located at the back of the 30S subunit body where it stabilizes the conformation of the head with respect to the body. The sequence is that of Small ribosomal subunit protein uS5 from Azotobacter vinelandii (strain DJ / ATCC BAA-1303).